A 136-amino-acid polypeptide reads, in one-letter code: Small ribosomal subunit protein uS9 (136 aa).

This sequence belongs to the universal ribosomal protein uS9 family.

The chain is Small ribosomal subunit protein uS9 from Borreliella afzelii (strain PKo) (Borrelia afzelii).